Reading from the N-terminus, the 340-residue chain is Ketol-acid reductoisomerase (NADP(+)) (340 aa).

Residues 1–183 form the KARI N-terminal Rossmann domain; the sequence is MAVTVYYDKD…GAGRTGIIET (183 aa). NADP(+) is bound by residues 26–29, Lys-49, Ser-54, and 84–87; these read FGSQ and DELQ. Residue His-109 is part of the active site. Residue Gly-135 coordinates NADP(+). The KARI C-terminal knotted domain maps to 184–329; that stretch reads TFKDETETDL…EKLRAMMPWI (146 aa). Mg(2+) contacts are provided by Asp-192, Glu-196, Glu-228, and Glu-232. Substrate is bound at residue Ser-253.

Belongs to the ketol-acid reductoisomerase family. Requires Mg(2+) as cofactor.

The enzyme catalyses (2R)-2,3-dihydroxy-3-methylbutanoate + NADP(+) = (2S)-2-acetolactate + NADPH + H(+). It catalyses the reaction (2R,3R)-2,3-dihydroxy-3-methylpentanoate + NADP(+) = (S)-2-ethyl-2-hydroxy-3-oxobutanoate + NADPH + H(+). It participates in amino-acid biosynthesis; L-isoleucine biosynthesis; L-isoleucine from 2-oxobutanoate: step 2/4. The protein operates within amino-acid biosynthesis; L-valine biosynthesis; L-valine from pyruvate: step 2/4. Functionally, involved in the biosynthesis of branched-chain amino acids (BCAA). Catalyzes an alkyl-migration followed by a ketol-acid reduction of (S)-2-acetolactate (S2AL) to yield (R)-2,3-dihydroxy-isovalerate. In the isomerase reaction, S2AL is rearranged via a Mg-dependent methyl migration to produce 3-hydroxy-3-methyl-2-ketobutyrate (HMKB). In the reductase reaction, this 2-ketoacid undergoes a metal-dependent reduction by NADPH to yield (R)-2,3-dihydroxy-isovalerate. The sequence is that of Ketol-acid reductoisomerase (NADP(+)) from Campylobacter hominis (strain ATCC BAA-381 / DSM 21671 / CCUG 45161 / LMG 19568 / NCTC 13146 / CH001A).